The following is a 745-amino-acid chain: Junction plakoglobin (745 aa).

Met1 carries the post-translational modification N-acetylmethionine. The O-linked (GlcNAc) threonine glycan is linked to Thr14. A phosphoserine mark is found at Ser99 and Ser125. ARM repeat units follow at residues Asn132–Lys171, Lys172–His215, Arg216–Leu255, Glu258–Tyr297, Gly298–Cys341, Pro342–Asp381, Ala383–Cys420, Ser423–Ser464, Glu470–Leu510, Pro512–Thr551, Pro574–Gln613, and Lys615–Arg661. The tract at residues Asn132–Tyr297 is interaction with DSC1 and DSG1. Ser182 is subject to Phosphoserine. The tract at residues Pro574–Arg661 is interaction with DSC1. Phosphoserine occurs at positions 665 and 730.

It belongs to the beta-catenin family. As to quaternary structure, homodimer. Component of an E-cadherin/catenin adhesion complex composed of at least E-cadherin/CDH1 and gamma-catenin/JUP, and possibly alpha-catenin/CTNNA1; the complex is located to adherens junctions. The stable association of CTNNA1 is controversial as CTNNA1 was shown not to bind to F-actin when assembled in the complex. Interacts with MUC1. Interacts with CAV1. Interacts with PTPRJ. Interacts with DSG1. Interacts with DSC1 and DSC2. Interacts with PKP2. Interacts with PKP3 (via N-terminus); the interaction is required for PKP3 localization to desmosome cell-cell junctions. Interacts with DSG4. In terms of processing, may be phosphorylated by FER.

It localises to the cell junction. Its subcellular location is the adherens junction. The protein resides in the desmosome. It is found in the cytoplasm. The protein localises to the cytoskeleton. It localises to the cell membrane. Its subcellular location is the nucleus. Common junctional plaque protein. The membrane-associated plaques are architectural elements in an important strategic position to influence the arrangement and function of both the cytoskeleton and the cells within the tissue. The presence of plakoglobin in both the desmosomes and in the intermediate junctions suggests that it plays a central role in the structure and function of submembranous plaques. Acts as a substrate for VE-PTP and is required by it to stimulate VE-cadherin function in endothelial cells. Can replace beta-catenin in E-cadherin/catenin adhesion complexes which are proposed to couple cadherins to the actin cytoskeleton. The protein is Junction plakoglobin of Sus scrofa (Pig).